We begin with the raw amino-acid sequence, 189 residues long: Protein C1orf43 homolog (189 aa).

Residues 11-31 (VNVVLVMAYGSLVFVLLFIFV) form a helical membrane-spanning segment.

It localises to the membrane. Its subcellular location is the golgi apparatus. The protein resides in the mitochondrion. In terms of biological role, general regulator of phagocytosis. Required to uptake Gram negative bacterium by macrophages. This Pongo abelii (Sumatran orangutan) protein is Protein C1orf43 homolog.